A 373-amino-acid chain; its full sequence is Dual-specificity RNA methyltransferase RlmN (373 aa).

The active-site Proton acceptor is E94. The Radical SAM core domain maps to 100–339; sequence EDDRATLCVS…VIVRKTRGDD (240 aa). The cysteines at positions 107 and 344 are disulfide-linked. [4Fe-4S] cluster-binding residues include C114, C118, and C121. S-adenosyl-L-methionine is bound by residues 168–169, S200, 222–224, and N301; these read GE and SIH. C344 functions as the S-methylcysteine intermediate in the catalytic mechanism.

This sequence belongs to the radical SAM superfamily. RlmN family. [4Fe-4S] cluster serves as cofactor.

The protein resides in the cytoplasm. It carries out the reaction adenosine(2503) in 23S rRNA + 2 reduced [2Fe-2S]-[ferredoxin] + 2 S-adenosyl-L-methionine = 2-methyladenosine(2503) in 23S rRNA + 5'-deoxyadenosine + L-methionine + 2 oxidized [2Fe-2S]-[ferredoxin] + S-adenosyl-L-homocysteine. It catalyses the reaction adenosine(37) in tRNA + 2 reduced [2Fe-2S]-[ferredoxin] + 2 S-adenosyl-L-methionine = 2-methyladenosine(37) in tRNA + 5'-deoxyadenosine + L-methionine + 2 oxidized [2Fe-2S]-[ferredoxin] + S-adenosyl-L-homocysteine. Functionally, specifically methylates position 2 of adenine 2503 in 23S rRNA and position 2 of adenine 37 in tRNAs. m2A2503 modification seems to play a crucial role in the proofreading step occurring at the peptidyl transferase center and thus would serve to optimize ribosomal fidelity. This chain is Dual-specificity RNA methyltransferase RlmN, found in Shewanella denitrificans (strain OS217 / ATCC BAA-1090 / DSM 15013).